A 161-amino-acid polypeptide reads, in one-letter code: Zinc finger protein KNUCKLES (161 aa).

Residues Met-1–Ala-33 form a disordered region. A C2H2-type zinc finger spans residues Phe-38–His-60. Residues Gly-142–Leu-161 are disordered. The EAR-like (transcriptional repression) signature appears at Leu-155–Leu-159.

As to expression, first expressed in developing carpel primordia, and later in stamens and ovules of flower buds.

It is found in the nucleus. May function as a transcriptional repressor of cellular proliferation that regulates floral determinacy and relative size of basal pattern elements along the proximo-distal axis of the developing gynoecium. The protein is Zinc finger protein KNUCKLES (KNU) of Arabidopsis thaliana (Mouse-ear cress).